The primary structure comprises 31 residues: uncharacterized protein (31 aa).

A helical transmembrane segment spans residues Thr7–Trp29.

The protein resides in the cell inner membrane. This is an uncharacterized protein from Escherichia coli (strain K12).